The chain runs to 289 residues: ATP synthase mitochondrial F1 complex assembly factor 2 (289 aa).

Residues 1-40 constitute a mitochondrion transit peptide; that stretch reads MWRIYPRLRDRWRGLLDRRLSDPTVSVWPGPAPQPPARAY. Lys-133 is subject to N6-succinyllysine.

The protein belongs to the ATP12 family. As to quaternary structure, interacts with ATP5F1B; involved in the assembly of the F1 component of the mitochondrial ATP synthase (ATPase). Interacts with FMC1.

It localises to the mitochondrion inner membrane. Functionally, plays a role in the assembly of the F1 component of the mitochondrial ATP synthase (ATPase). This Mus musculus (Mouse) protein is ATP synthase mitochondrial F1 complex assembly factor 2.